The primary structure comprises 274 residues: Putative hydro-lyase SAV_6940 (274 aa).

It belongs to the D-glutamate cyclase family.

This is Putative hydro-lyase SAV_6940 from Streptomyces avermitilis (strain ATCC 31267 / DSM 46492 / JCM 5070 / NBRC 14893 / NCIMB 12804 / NRRL 8165 / MA-4680).